A 282-amino-acid polypeptide reads, in one-letter code: Serine/threonine-protein kinase Aurora-2 (282 aa).

Residues 19 to 270 form the Protein kinase domain; that stretch reads FDIGKPLGRG…LHKLLEHPWI (252 aa). ATP contacts are provided by residues 25-33 and Lys48; that span reads LGRGKFGHV. Asp142 serves as the catalytic Proton acceptor. Phosphoserine is present on Ser164. Thr173 carries the phosphothreonine modification.

The protein belongs to the protein kinase superfamily. Ser/Thr protein kinase family. Aurora subfamily. Post-translationally, phosphorylation at Thr-173 may regulate activity and degradation of AUR2 in a cell cycle dependent manner. As to expression, abundant in roots, flowers and flower buds, low or absent in expanded leaves, stems and siliques.

The protein localises to the nucleus membrane. The protein resides in the cytoplasm. Its subcellular location is the cytoskeleton. It is found in the spindle. It localises to the spindle pole. It carries out the reaction L-seryl-[protein] + ATP = O-phospho-L-seryl-[protein] + ADP + H(+). It catalyses the reaction L-threonyl-[protein] + ATP = O-phospho-L-threonyl-[protein] + ADP + H(+). Phosphorylates specifically 'Ser-10' of histone H3 in vitro. Associates with cytoskeletal structures that are necessary for cytokinesis and with the microtubule spindle. Might colocalize with gamma-tubulin and function in microtubule organizing centers (MTOCs). The sequence is that of Serine/threonine-protein kinase Aurora-2 (AUR2) from Arabidopsis thaliana (Mouse-ear cress).